A 190-amino-acid chain; its full sequence is Protein GrpE (190 aa).

Basic and acidic residues predominate over residues 1–10 (MKKHVTEEQK). Positions 1-42 (MKKHVTEEQKTSAAPEAEQASPESSAAEAATPEERISRLEEQ) are disordered. Low complexity predominate over residues 12–30 (SAAPEAEQASPESSAAEAA). Positions 32-42 (PEERISRLEEQ) are enriched in basic and acidic residues.

Belongs to the GrpE family. Homodimer.

The protein resides in the cytoplasm. Its function is as follows. Participates actively in the response to hyperosmotic and heat shock by preventing the aggregation of stress-denatured proteins, in association with DnaK and GrpE. It is the nucleotide exchange factor for DnaK and may function as a thermosensor. Unfolded proteins bind initially to DnaJ; upon interaction with the DnaJ-bound protein, DnaK hydrolyzes its bound ATP, resulting in the formation of a stable complex. GrpE releases ADP from DnaK; ATP binding to DnaK triggers the release of the substrate protein, thus completing the reaction cycle. Several rounds of ATP-dependent interactions between DnaJ, DnaK and GrpE are required for fully efficient folding. The protein is Protein GrpE of Pelobacter propionicus (strain DSM 2379 / NBRC 103807 / OttBd1).